The following is a 48-amino-acid chain: uncharacterized protein (48 aa).

It localises to the mitochondrion. This is an uncharacterized protein from Emericella nidulans (Aspergillus nidulans).